A 319-amino-acid chain; its full sequence is Small ribosomal subunit protein mS35 (319 aa).

The transit peptide at 1–30 directs the protein to the mitochondrion; the sequence is MKVPLGLWKVSRGNLWSTQKRVLTMSRCLN.

It belongs to the mitochondrion-specific ribosomal protein mS35 family. As to quaternary structure, component of the mitochondrial small ribosomal subunit (mt-SSU). Mature yeast 74S mitochondrial ribosomes consist of a small (37S) and a large (54S) subunit. The 37S small subunit contains a 15S ribosomal RNA (15S mt-rRNA) and 34 different proteins. The 54S large subunit contains a 21S rRNA (21S mt-rRNA) and 46 different proteins.

It localises to the mitochondrion. In terms of biological role, component of the mitochondrial ribosome (mitoribosome), a dedicated translation machinery responsible for the synthesis of mitochondrial genome-encoded proteins, including at least some of the essential transmembrane subunits of the mitochondrial respiratory chain. The mitoribosomes are attached to the mitochondrial inner membrane and translation products are cotranslationally integrated into the membrane. The protein is Small ribosomal subunit protein mS35 (RSM24) of Saccharomyces cerevisiae (strain ATCC 204508 / S288c) (Baker's yeast).